We begin with the raw amino-acid sequence, 359 residues long: Molybdenum import ATP-binding protein ModC (359 aa).

The 233-residue stretch at 1-233 folds into the ABC transporter domain; sequence MSGLTVSIRG…IDAESEGGGV (233 aa). 32-39 provides a ligand contact to ATP; that stretch reads GHSGAGKT. The Mop domain occupies 289-355; it reads AISIRNLLPV…VKAVSVDRAA (67 aa).

It belongs to the ABC transporter superfamily. Molybdate importer (TC 3.A.1.8) family. In terms of assembly, the complex is composed of two ATP-binding proteins (ModC), two transmembrane proteins (ModB) and a solute-binding protein (ModA).

Its subcellular location is the cell inner membrane. The catalysed reaction is molybdate(out) + ATP + H2O = molybdate(in) + ADP + phosphate + H(+). Its function is as follows. Part of the ABC transporter complex ModABC involved in molybdenum import. Responsible for energy coupling to the transport system. In Brucella suis biovar 1 (strain 1330), this protein is Molybdenum import ATP-binding protein ModC.